The following is a 363-amino-acid chain: Phosphoserine aminotransferase (363 aa).

An L-glutamate-binding site is contributed by arginine 42. Residues 76-77 (GR), tryptophan 102, threonine 156, aspartate 175, and glutamine 198 each bind pyridoxal 5'-phosphate. At lysine 199 the chain carries N6-(pyridoxal phosphate)lysine. A pyridoxal 5'-phosphate-binding site is contributed by 240 to 241 (NT).

It belongs to the class-V pyridoxal-phosphate-dependent aminotransferase family. SerC subfamily. In terms of assembly, homodimer. Pyridoxal 5'-phosphate serves as cofactor.

The protein resides in the cytoplasm. It carries out the reaction O-phospho-L-serine + 2-oxoglutarate = 3-phosphooxypyruvate + L-glutamate. The enzyme catalyses 4-(phosphooxy)-L-threonine + 2-oxoglutarate = (R)-3-hydroxy-2-oxo-4-phosphooxybutanoate + L-glutamate. It participates in amino-acid biosynthesis; L-serine biosynthesis; L-serine from 3-phospho-D-glycerate: step 2/3. The protein operates within cofactor biosynthesis; pyridoxine 5'-phosphate biosynthesis; pyridoxine 5'-phosphate from D-erythrose 4-phosphate: step 3/5. In terms of biological role, catalyzes the reversible conversion of 3-phosphohydroxypyruvate to phosphoserine and of 3-hydroxy-2-oxo-4-phosphonooxybutanoate to phosphohydroxythreonine. The sequence is that of Phosphoserine aminotransferase from Shewanella sp. (strain MR-4).